The primary structure comprises 221 residues: uncharacterized protein (221 aa).

6 consecutive transmembrane segments (helical) span residues 33 to 55 (YFLLPILLTYKMLGLSVFWISYI), 70 to 92 (FGYRLIPGVIFMFLSGAYLQKIV), 99 to 121 (LEMLSLIIIYIISLFWLVFFIII), 125 to 147 (YGAYTRETLLGLLVGIPLVYTLL), 154 to 176 (YFNDLFGKLSYGIFLSHFLSFWI), and 186 to 208 (IISMIFLSLIISASVSYLIITLI).

The protein localises to the cell membrane. This is an uncharacterized protein from Aquifex aeolicus (strain VF5).